Here is a 62-residue protein sequence, read N- to C-terminus: U8-theraphotoxin-Cg1a 2 (62 aa).

The signal sequence occupies residues 1 to 21 (MKTLVLFIIFGLAALFLLSSA). Residues 22-29 (TELEETER) constitute a propeptide that is removed on maturation. 3 disulfide bridges follow: cysteine 31/cysteine 46, cysteine 38/cysteine 51, and cysteine 45/cysteine 58.

Belongs to the neurotoxin 10 (Hwtx-1) family. 30 (Jztx-14) subfamily. In terms of tissue distribution, expressed by the venom gland.

The protein resides in the secreted. In terms of biological role, probable ion channel inhibitor. In Chilobrachys guangxiensis (Chinese earth tiger tarantula), this protein is U8-theraphotoxin-Cg1a 2.